We begin with the raw amino-acid sequence, 719 residues long: Polyribonucleotide nucleotidyltransferase (719 aa).

Mg(2+) is bound by residues Asp490 and Asp496. The region spanning 557–619 (PKIEIIIIPK…KSIDAALTRI (63 aa)) is the KH domain. The S1 motif domain maps to 629–699 (GEIYEGKIRS…KTGKFKLSHK (71 aa)).

This sequence belongs to the polyribonucleotide nucleotidyltransferase family. Requires Mg(2+) as cofactor.

It is found in the cytoplasm. The catalysed reaction is RNA(n+1) + phosphate = RNA(n) + a ribonucleoside 5'-diphosphate. Its function is as follows. Involved in mRNA degradation. Catalyzes the phosphorolysis of single-stranded polyribonucleotides processively in the 3'- to 5'-direction. The protein is Polyribonucleotide nucleotidyltransferase of Azobacteroides pseudotrichonymphae genomovar. CFP2.